The primary structure comprises 426 residues: Deoxyguanosinetriphosphate triphosphohydrolase-like protein (426 aa).

Residues 1-23 (MYPYSESDAQRLHQEAPKASQLA) are disordered. The 151-residue stretch at 67–217 (RLTHSLEVAQ…MDFSDDIAYS (151 aa)) folds into the HD domain.

This sequence belongs to the dGTPase family. Type 2 subfamily.

In Corynebacterium efficiens (strain DSM 44549 / YS-314 / AJ 12310 / JCM 11189 / NBRC 100395), this protein is Deoxyguanosinetriphosphate triphosphohydrolase-like protein.